The following is a 158-amino-acid chain: Endoribonuclease YbeY (158 aa).

The Zn(2+) site is built by H117, H121, and H127.

This sequence belongs to the endoribonuclease YbeY family. Zn(2+) is required as a cofactor.

The protein resides in the cytoplasm. Functionally, single strand-specific metallo-endoribonuclease involved in late-stage 70S ribosome quality control and in maturation of the 3' terminus of the 16S rRNA. This Psychromonas ingrahamii (strain DSM 17664 / CCUG 51855 / 37) protein is Endoribonuclease YbeY.